The chain runs to 491 residues: Synaptotagmin-9 (491 aa).

The Vesicular segment spans residues 1 to 52; sequence MPGARDALCHQALQLLAELCARGALEHDSCQDFIYHLRDRARPRLRDPDISV. The cysteine motif stretch occupies residues 9-31; sequence CHQALQLLAELCARGALEHDSCQ. The helical transmembrane segment at 53 to 73 threads the bilayer; it reads SLLTLVVTACGLALFGVSLFV. The Cytoplasmic portion of the chain corresponds to 74–491; that stretch reads SWKLCWVPWR…AHWHSLMEKR (418 aa). Over residues 91–104 the composition is skewed to polar residues; the sequence is SKDNNQEPLNYTDT. The tract at residues 91–147 is disordered; the sequence is SKDNNQEPLNYTDTETNEQENSEDFLDPPTPCPDSSMKISHTSPDIPLSTQPGGQEN. Acidic residues predominate over residues 105–116; the sequence is ETNEQENSEDFL. A compositionally biased stretch (polar residues) spans 127–144; the sequence is MKISHTSPDIPLSTQPGG. Ser177 is subject to Phosphoserine. 2 consecutive C2 domains span residues 220–341 and 352–485; these read ACGK…ILWK and DLGE…AHWH. Ca(2+)-binding residues include Asp251, Asp257, Asp309, Phe310, Asp311, Ser314, Asp317, Asp383, Asp389, Asp443, and Asp445.

It belongs to the synaptotagmin family. In terms of assembly, homodimer; disulfide-linked via the cysteine motif. Can also form heterodimers with SYT3, SYT6, SYT7 and SYT10. Interacts with DNAJC5 and SNAP25, but not with HSC70. The interaction with DNAJC5 is stimulated tenfold in presence of calcium while the interaction with SNAP25 is inhibited. It depends on Ca(2+) as a cofactor.

It is found in the cytoplasmic vesicle. It localises to the secretory vesicle. The protein localises to the synaptic vesicle membrane. May be involved in Ca(2+)-dependent exocytosis of secretory vesicles through Ca(2+) and phospholipid binding to the C2 domain or may serve as Ca(2+) sensors in the process of vesicular trafficking and exocytosis. This Mus musculus (Mouse) protein is Synaptotagmin-9 (Syt9).